The sequence spans 122 residues: UPF0102 protein xcc-b100_3645 (122 aa).

The protein belongs to the UPF0102 family.

This Xanthomonas campestris pv. campestris (strain B100) protein is UPF0102 protein xcc-b100_3645.